The primary structure comprises 424 residues: Tyrosine--tRNA ligase (424 aa).

Tyr-37 is a binding site for L-tyrosine. The short motif at 42 to 51 (PTADSLHLGH) is the 'HIGH' region element. Position 144 is an N6-acetyllysine (Lys-144). Positions 175 and 179 each coordinate L-tyrosine. Positions 235–239 (KFGKT) match the 'KMSKS' region motif. Lys-238 serves as a coordination point for ATP. An S4 RNA-binding domain is found at 357–414 (ADLMQALVDSELQPSRGQARKTIASNAVTINGEKQSDPEYFFKEEDRLFGRFTLLRRG).

Belongs to the class-I aminoacyl-tRNA synthetase family. TyrS type 1 subfamily. Homodimer.

It localises to the cytoplasm. It catalyses the reaction tRNA(Tyr) + L-tyrosine + ATP = L-tyrosyl-tRNA(Tyr) + AMP + diphosphate + H(+). Functionally, catalyzes the attachment of tyrosine to tRNA(Tyr) in a two-step reaction: tyrosine is first activated by ATP to form Tyr-AMP and then transferred to the acceptor end of tRNA(Tyr). In Escherichia fergusonii (strain ATCC 35469 / DSM 13698 / CCUG 18766 / IAM 14443 / JCM 21226 / LMG 7866 / NBRC 102419 / NCTC 12128 / CDC 0568-73), this protein is Tyrosine--tRNA ligase.